Reading from the N-terminus, the 95-residue chain is Large ribosomal subunit protein uL23 (95 aa).

It belongs to the universal ribosomal protein uL23 family. As to quaternary structure, part of the 50S ribosomal subunit. Contacts protein L29, and trigger factor when it is bound to the ribosome.

In terms of biological role, one of the early assembly proteins it binds 23S rRNA. One of the proteins that surrounds the polypeptide exit tunnel on the outside of the ribosome. Forms the main docking site for trigger factor binding to the ribosome. In Pediococcus pentosaceus (strain ATCC 25745 / CCUG 21536 / LMG 10740 / 183-1w), this protein is Large ribosomal subunit protein uL23.